A 300-amino-acid polypeptide reads, in one-letter code: UDP-3-O-acyl-N-acetylglucosamine deacetylase (300 aa).

Zn(2+) contacts are provided by His78, His237, and Asp241. Residue His264 is the Proton donor of the active site.

It belongs to the LpxC family. Zn(2+) is required as a cofactor.

It carries out the reaction a UDP-3-O-[(3R)-3-hydroxyacyl]-N-acetyl-alpha-D-glucosamine + H2O = a UDP-3-O-[(3R)-3-hydroxyacyl]-alpha-D-glucosamine + acetate. It functions in the pathway glycolipid biosynthesis; lipid IV(A) biosynthesis; lipid IV(A) from (3R)-3-hydroxytetradecanoyl-[acyl-carrier-protein] and UDP-N-acetyl-alpha-D-glucosamine: step 2/6. Its function is as follows. Catalyzes the hydrolysis of UDP-3-O-myristoyl-N-acetylglucosamine to form UDP-3-O-myristoylglucosamine and acetate, the committed step in lipid A biosynthesis. The sequence is that of UDP-3-O-acyl-N-acetylglucosamine deacetylase from Acinetobacter baumannii (strain AB307-0294).